We begin with the raw amino-acid sequence, 168 residues long: uncharacterized protein (168 aa).

2 consecutive 4Fe-4S ferredoxin-type domains span residues 48–78 (KIPKTVIEELCIGCEGCANVCPTKAIEMIPI) and 91–122 (KIPKINPEKCVYCLYCHDFCPVFSVFNEISPI). Residues Cys58, Cys61, Cys64, Cys68, Cys100, Cys103, Cys106, and Cys110 each coordinate [4Fe-4S] cluster.

This is an uncharacterized protein from Methanocaldococcus jannaschii (strain ATCC 43067 / DSM 2661 / JAL-1 / JCM 10045 / NBRC 100440) (Methanococcus jannaschii).